Reading from the N-terminus, the 461-residue chain is Eukaryotic translation initiation factor 3 subunit M (461 aa).

Residues 42–61 (LLEPLRQQEQSDAEPDRKQR) form a disordered region. In terms of domain architecture, PCI spans 205-376 (DQELAQTHVV…SEFLVHRATY (172 aa)). The disordered stretch occupies residues 422–461 (AAEEAAQGKSGDKKGDRRQRRDQPQQSQPAPEAATAVAAE). Basic and acidic residues predominate over residues 431 to 444 (SGDKKGDRRQRRDQ). Residues 445 to 461 (PQQSQPAPEAATAVAAE) are compositionally biased toward low complexity.

It belongs to the eIF-3 subunit M family. Component of the eukaryotic translation initiation factor 3 (eIF-3) complex.

The protein resides in the cytoplasm. Functionally, component of the eukaryotic translation initiation factor 3 (eIF-3) complex, which is involved in protein synthesis of a specialized repertoire of mRNAs and, together with other initiation factors, stimulates binding of mRNA and methionyl-tRNAi to the 40S ribosome. The eIF-3 complex specifically targets and initiates translation of a subset of mRNAs involved in cell proliferation. The protein is Eukaryotic translation initiation factor 3 subunit M of Aspergillus terreus (strain NIH 2624 / FGSC A1156).